Here is a 333-residue protein sequence, read N- to C-terminus: tRNA(Ile)-lysidine synthase (333 aa).

Residue 33 to 38 (SGGADS) participates in ATP binding.

This sequence belongs to the tRNA(Ile)-lysidine synthase family.

The protein localises to the cytoplasm. It carries out the reaction cytidine(34) in tRNA(Ile2) + L-lysine + ATP = lysidine(34) in tRNA(Ile2) + AMP + diphosphate + H(+). Functionally, ligates lysine onto the cytidine present at position 34 of the AUA codon-specific tRNA(Ile) that contains the anticodon CAU, in an ATP-dependent manner. Cytidine is converted to lysidine, thus changing the amino acid specificity of the tRNA from methionine to isoleucine. The protein is tRNA(Ile)-lysidine synthase of Salinispora tropica (strain ATCC BAA-916 / DSM 44818 / JCM 13857 / NBRC 105044 / CNB-440).